Consider the following 290-residue polypeptide: 4-diphosphocytidyl-2-C-methyl-D-erythritol kinase (290 aa).

Lys-12 is a catalytic residue. Position 97-107 (97-107) interacts with ATP; the sequence is PVASGIGGGSA. Residue Asp-139 is part of the active site.

It belongs to the GHMP kinase family. IspE subfamily.

The catalysed reaction is 4-CDP-2-C-methyl-D-erythritol + ATP = 4-CDP-2-C-methyl-D-erythritol 2-phosphate + ADP + H(+). Its pathway is isoprenoid biosynthesis; isopentenyl diphosphate biosynthesis via DXP pathway; isopentenyl diphosphate from 1-deoxy-D-xylulose 5-phosphate: step 3/6. In terms of biological role, catalyzes the phosphorylation of the position 2 hydroxy group of 4-diphosphocytidyl-2C-methyl-D-erythritol. The polypeptide is 4-diphosphocytidyl-2-C-methyl-D-erythritol kinase (Parvibaculum lavamentivorans (strain DS-1 / DSM 13023 / NCIMB 13966)).